Consider the following 105-residue polypeptide: Thioredoxin (105 aa).

Residues Val2–Ala105 enclose the Thioredoxin domain. Lys3 carries the N6-acetyllysine modification. Lys8 bears the N6-succinyllysine mark. Catalysis depends on nucleophile residues Cys32 and Cys35. Residues Cys32 and Cys35 are joined by a disulfide bond. Residue Lys39 is modified to N6-acetyllysine. Residues Cys62 and Cys69 each carry the S-nitrosocysteine modification. Cys73 bears the S-nitrosocysteine; alternate mark. At Lys94 the chain carries N6-acetyllysine; alternate. At Lys94 the chain carries N6-succinyllysine; alternate.

The protein belongs to the thioredoxin family. Homodimer; disulfide-linked. Interacts with TXNIP through the redox-active site. Interacts with MAP3K5 and CASP3. Interacts with APEX1; the interaction stimulates the FOS/JUN AP-1 DNA-binding activity in a redox-dependent manner. In terms of processing, in the fully reduced protein, both Cys-69 and Cys-73 are nitrosylated in response to nitric oxide (NO). When two disulfide bonds are present in the protein, only Cys-73 is nitrosylated. Cys-73 can serve as donor for nitrosylation of target proteins.

It is found in the nucleus. The protein localises to the cytoplasm. It localises to the secreted. Functionally, participates in various redox reactions through the reversible oxidation of its active center dithiol to a disulfide and catalyzes dithiol-disulfide exchange reactions. Plays a role in the reversible S-nitrosylation of cysteine residues in target proteins, and thereby contributes to the response to intracellular nitric oxide. Nitrosylates the active site Cys of CASP3 in response to nitric oxide (NO), and thereby inhibits caspase-3 activity. Induces the FOS/JUN AP-1 DNA binding activity in ionizing radiation (IR) cells through its oxidation/reduction status and stimulates AP-1 transcriptional activity. The protein is Thioredoxin (Txn) of Rattus norvegicus (Rat).